The following is a 36-amino-acid chain: APMEPVYPGDNATPEQMAQYAAELRRYINMLTRPRY.

Tyr-36 is subject to Tyrosine amide.

Belongs to the NPY family.

The protein resides in the secreted. In terms of biological role, hormone secreted by pancreatic cells that acts as a regulator of pancreatic and gastrointestinal functions probably by signaling through the G protein-coupled receptor NPY4R2. The chain is Pancreatic polypeptide (PPY) from Equus przewalskii (Przewalski's horse).